We begin with the raw amino-acid sequence, 364 residues long: WAT1-related protein At5g47470 (364 aa).

10 helical membrane passes run 28–48, 59–79, 93–113, 124–144, 158–178, 197–217, 228–248, 255–275, 293–313, and 319–339; these read MVIVGGLVMVQFVYAGNSLLM, FTIVIFSTFATFIILSPFAIL, LIGKLVLISFAGVTLFQSLFL, ATAMPNLAPGLIFFIAWIVGL, ILGTLLCVFGALAMSVMHSTS, VVGCIYLLGAVFVLSTNVVLQ, ISLSAITALLGVLITTVVLLL, VLASSLISFGNLVGYSVLAGA, PVFVSMFSPFATVISVAFAVL, and VSLGSVGGMVLMFVGLYLVLW. The EamA 1 domain occupies 40-172; sequence VYAGNSLLMS…LCVFGALAMS (133 aa). The 120-residue stretch at 219 to 338 folds into the EamA 2 domain; the sequence is STLAEFPAPI…LMFVGLYLVL (120 aa).

The protein belongs to the drug/metabolite transporter (DMT) superfamily. Plant drug/metabolite exporter (P-DME) (TC 2.A.7.4) family.

The protein resides in the membrane. This chain is WAT1-related protein At5g47470, found in Arabidopsis thaliana (Mouse-ear cress).